Reading from the N-terminus, the 131-residue chain is Profilin-1 (131 aa).

This sequence belongs to the profilin family. As to quaternary structure, occurs in many kinds of cells as a complex with monomeric actin in a 1:1 ratio.

The protein localises to the cytoplasm. Its subcellular location is the cytoskeleton. Its function is as follows. Binds to actin and affects the structure of the cytoskeleton. At high concentrations, profilin prevents the polymerization of actin, whereas it enhances it at low concentrations. By binding to PIP2, it inhibits the formation of IP3 and DG. The polypeptide is Profilin-1 (Hevea brasiliensis (Para rubber tree)).